The following is a 332-amino-acid chain: NH(3)-dependent NAD(+) synthetase (332 aa).

ATP is bound at residue 48–55 (GLSGGVDS). A Mg(2+)-binding site is contributed by D54. Residue R184 participates in deamido-NAD(+) binding. T204 contacts ATP. Residue E209 participates in Mg(2+) binding. Residues K217 and D224 each contribute to the deamido-NAD(+) site. Residues K233 and T255 each coordinate ATP.

It belongs to the NAD synthetase family. As to quaternary structure, homodimer.

The enzyme catalyses deamido-NAD(+) + NH4(+) + ATP = AMP + diphosphate + NAD(+) + H(+). It participates in cofactor biosynthesis; NAD(+) biosynthesis; NAD(+) from deamido-NAD(+) (ammonia route): step 1/1. Functionally, catalyzes the ATP-dependent amidation of deamido-NAD to form NAD. Uses ammonia as a nitrogen source. This Rhizobium rhizogenes (strain K84 / ATCC BAA-868) (Agrobacterium radiobacter) protein is NH(3)-dependent NAD(+) synthetase.